The following is a 171-amino-acid chain: Peptide deformylase (171 aa).

2 residues coordinate Fe cation: cysteine 87 and histidine 129. Residue glutamate 130 is part of the active site. A Fe cation-binding site is contributed by histidine 133.

Belongs to the polypeptide deformylase family. Fe(2+) is required as a cofactor.

It catalyses the reaction N-terminal N-formyl-L-methionyl-[peptide] + H2O = N-terminal L-methionyl-[peptide] + formate. Its function is as follows. Removes the formyl group from the N-terminal Met of newly synthesized proteins. Requires at least a dipeptide for an efficient rate of reaction. N-terminal L-methionine is a prerequisite for activity but the enzyme has broad specificity at other positions. This Pseudothermotoga lettingae (strain ATCC BAA-301 / DSM 14385 / NBRC 107922 / TMO) (Thermotoga lettingae) protein is Peptide deformylase.